The sequence spans 378 residues: SWI/SNF-related matrix-associated actin-dependent regulator of chromatin subfamily B member 1 (378 aa).

Residues 1-106 are DNA-binding; that stretch reads MIMALSKTFG…DEKYKAVSIS (106 aa).

Belongs to the SNF5 family. Component of the multiprotein chromatin-remodeling complexes SWI/SNF. Component of neural progenitors-specific chromatin remodeling complex (npBAF complex) and the neuron-specific chromatin remodeling complex (nBAF complex). Component of the BAF (SWI/SNF) chromatin remodeling complex. Component of the SWI/SNF-B (PBAF) chromatin remodeling complex. Binds to double-stranded DNA.

Its subcellular location is the nucleus. Its function is as follows. Involved in chromatin-remodeling. Core component of the BAF (SWI/SNF) complex. This ATP-dependent chromatin-remodeling complex plays important roles in cell proliferation and differentiation, in cellular antiviral activities and inhibition of tumor formation. Belongs to the neural progenitors-specific chromatin remodeling complex (npBAF complex) and the neuron-specific chromatin remodeling complex (nBAF complex) and may play a role in neural development. The sequence is that of SWI/SNF-related matrix-associated actin-dependent regulator of chromatin subfamily B member 1 (smarcb1) from Xenopus tropicalis (Western clawed frog).